We begin with the raw amino-acid sequence, 179 residues long: tRNA (cytidine(56)-2'-O)-methyltransferase (179 aa).

S-adenosyl-L-methionine-binding positions include leucine 82, 110–114 (GAEKV), and 128–135 (VGNQPHSE).

Belongs to the aTrm56 family. In terms of assembly, homodimer.

The protein localises to the cytoplasm. The enzyme catalyses cytidine(56) in tRNA + S-adenosyl-L-methionine = 2'-O-methylcytidine(56) in tRNA + S-adenosyl-L-homocysteine + H(+). Specifically catalyzes the AdoMet-dependent 2'-O-ribose methylation of cytidine at position 56 in tRNAs. This is tRNA (cytidine(56)-2'-O)-methyltransferase from Methanocaldococcus jannaschii (strain ATCC 43067 / DSM 2661 / JAL-1 / JCM 10045 / NBRC 100440) (Methanococcus jannaschii).